Consider the following 436-residue polypeptide: 3-hydroxy-3-methylglutaryl-coenzyme A reductase (436 aa).

Residues Glu-99, Lys-277, and Asp-293 each act as charge relay system in the active site. Catalysis depends on His-390, which acts as the Proton donor.

It belongs to the HMG-CoA reductase family.

It catalyses the reaction (R)-mevalonate + 2 NADP(+) + CoA = (3S)-3-hydroxy-3-methylglutaryl-CoA + 2 NADPH + 2 H(+). It participates in metabolic intermediate biosynthesis; (R)-mevalonate biosynthesis; (R)-mevalonate from acetyl-CoA: step 3/3. Converts HMG-CoA to mevalonate. The chain is 3-hydroxy-3-methylglutaryl-coenzyme A reductase (hmgA) from Archaeoglobus fulgidus (strain ATCC 49558 / DSM 4304 / JCM 9628 / NBRC 100126 / VC-16).